The sequence spans 43 residues: Protein PsbN (43 aa).

A helical membrane pass occupies residues 5–27; it reads TFLSIFISAALLGITGYSIYTAF.

This sequence belongs to the PsbN family.

The protein localises to the plastid. The protein resides in the cyanelle thylakoid membrane. Functionally, may play a role in photosystem I and II biogenesis. The protein is Protein PsbN of Cyanophora paradoxa.